Reading from the N-terminus, the 766-residue chain is Single-minded homolog 1 (766 aa).

A bHLH domain is found at Met-1–Arg-53. PAS domains lie at Gly-77–His-147 and Pro-218–Gly-288. Positions Thr-292 to Thr-335 constitute a PAC domain. The Single-minded C-terminal domain maps to Glu-336–Ser-766. Residues Ala-353–Thr-365 are compositionally biased toward polar residues. Disordered regions lie at residues Ala-353 to Asp-431, Trp-528 to Lys-563, and Ser-642 to Asn-662. The short motif at Arg-368–Tyr-387 is the Nuclear localization signal element. Residues Ser-373–Ser-385 show a composition bias toward low complexity. The span at His-394–Ser-404 shows a compositional bias: basic and acidic residues. A compositionally biased stretch (polar residues) spans Asp-649–Asn-662.

As to quaternary structure, efficient DNA binding requires dimerization with another bHLH protein. Heterodimer; forms a heterodimer with ARNT, ARNT2.

The protein localises to the nucleus. Its function is as follows. Transcriptional factor that may have pleiotropic effects during embryogenesis and in the adult. This is Single-minded homolog 1 (SIM1) from Pan troglodytes (Chimpanzee).